Consider the following 449-residue polypeptide: G-protein coupled receptor 61 (449 aa).

Low complexity predominate over residues 1–14 (MESSPIPQSSGNSS). The interval 1 to 29 (MESSPIPQSSGNSSTLGRALQTPGPSTAS) is disordered. The Extracellular portion of the chain corresponds to 1–44 (MESSPIPQSSGNSSTLGRALQTPGPSTASGVPELGLRDVASESV). Asn-12 carries an N-linked (GlcNAc...) asparagine glycan. The helical transmembrane segment at 45 to 67 (ALFFMLLLDLTAVAGNAAVMAVI) threads the bilayer. Topologically, residues 68–75 (AKTPALRK) are cytoplasmic. The chain crosses the membrane as a helical span at residues 76-98 (FVFVFHLCLVDLLAALTLMPLAM). Residues 99–112 (LSSSALFDHALFGE) are Extracellular-facing. A helical membrane pass occupies residues 113-135 (VACRLYLFLSVCFVSLAILSVSA). Topologically, residues 136-155 (INVERYYYVVHPMRYEVRMT) are cytoplasmic. The chain crosses the membrane as a helical span at residues 156 to 178 (LGLVASVLVGVWVKALAMASVPV). At 179 to 206 (LGRVYWEEGAPSVNPGCSLQWSHSAYCQ) the chain is on the extracellular side. The chain crosses the membrane as a helical span at residues 207–229 (LFVVVFAVLYFLLPLILIFVVYC). Over 230 to 287 (SMFRVARVAAMQHGPLPTWMETPRQRSESLSSRSTMVTSSGAHQTTPHRTFGGGKAAV) the chain is Cytoplasmic. A helical membrane pass occupies residues 288–310 (VLLAVGGQFLLCWLPYFSFHLYV). Residues 311-324 (ALSAQPISAGQVEN) are Extracellular-facing. Residues 325–344 (VVTWIGYFCFTSNPFFYGCL) traverse the membrane as a helical segment. Topologically, residues 345-449 (NRQIRGELSK…RPAPSPRLES (105 aa)) are cytoplasmic.

It belongs to the G-protein coupled receptor 1 family. As to quaternary structure, forms heterodimer with MTNR1B. Interacts with ARRB1 and ARRB2 in a spontaneous and agonist-independent manner; leading to the internalization of GPR61 in the endosomal compartment. In terms of tissue distribution, predominantly expressed in the brain and testes, with relatively lower expression observed in the eye, adrenal gland and pituitary gland.

It localises to the cell membrane. It is found in the endosome membrane. Its function is as follows. Orphan G-protein coupled receptor. Constitutively activates the G(s)-alpha/cAMP signaling pathway. Shows a reciprocal regulatory interaction with the melatonin receptor MTNR1B most likely through receptor heteromerization. May be involved in the regulation of food intake and body weight. In Mus musculus (Mouse), this protein is G-protein coupled receptor 61 (Gpr61).